Consider the following 132-residue polypeptide: Translation initiation factor 5A (132 aa).

A Hypusine modification is found at Lys-36.

It belongs to the eIF-5A family.

The protein resides in the cytoplasm. Its function is as follows. Functions by promoting the formation of the first peptide bond. This chain is Translation initiation factor 5A (eIF5A), found in Desulfurococcus amylolyticus (strain DSM 18924 / JCM 16383 / VKM B-2413 / 1221n) (Desulfurococcus kamchatkensis).